The chain runs to 317 residues: Pyridoxal 5'-phosphate synthase subunit PdxS (317 aa).

D47 contacts D-ribose 5-phosphate. Catalysis depends on K104, which acts as the Schiff-base intermediate with D-ribose 5-phosphate. Residue G176 participates in D-ribose 5-phosphate binding. Residue R188 coordinates D-glyceraldehyde 3-phosphate. D-ribose 5-phosphate contacts are provided by residues G237 and 258-259; that span reads GS.

This sequence belongs to the PdxS/SNZ family. As to quaternary structure, in the presence of PdxT, forms a dodecamer of heterodimers.

The catalysed reaction is aldehydo-D-ribose 5-phosphate + D-glyceraldehyde 3-phosphate + L-glutamine = pyridoxal 5'-phosphate + L-glutamate + phosphate + 3 H2O + H(+). The protein operates within cofactor biosynthesis; pyridoxal 5'-phosphate biosynthesis. In terms of biological role, catalyzes the formation of pyridoxal 5'-phosphate from ribose 5-phosphate (RBP), glyceraldehyde 3-phosphate (G3P) and ammonia. The ammonia is provided by the PdxT subunit. Can also use ribulose 5-phosphate and dihydroxyacetone phosphate as substrates, resulting from enzyme-catalyzed isomerization of RBP and G3P, respectively. The sequence is that of Pyridoxal 5'-phosphate synthase subunit PdxS from Corynebacterium glutamicum (strain ATCC 13032 / DSM 20300 / JCM 1318 / BCRC 11384 / CCUG 27702 / LMG 3730 / NBRC 12168 / NCIMB 10025 / NRRL B-2784 / 534).